The chain runs to 420 residues: UDP-N-acetylmuramoylalanine--D-glutamate ligase (420 aa).

An ATP-binding site is contributed by 109-115; the sequence is GSAGKTT.

The protein belongs to the MurCDEF family.

It localises to the cytoplasm. The enzyme catalyses UDP-N-acetyl-alpha-D-muramoyl-L-alanine + D-glutamate + ATP = UDP-N-acetyl-alpha-D-muramoyl-L-alanyl-D-glutamate + ADP + phosphate + H(+). It participates in cell wall biogenesis; peptidoglycan biosynthesis. Cell wall formation. Catalyzes the addition of glutamate to the nucleotide precursor UDP-N-acetylmuramoyl-L-alanine (UMA). The chain is UDP-N-acetylmuramoylalanine--D-glutamate ligase from Chlamydia abortus (strain DSM 27085 / S26/3) (Chlamydophila abortus).